Consider the following 249-residue polypeptide: MIT domain-containing protein 1 (249 aa).

The 79-residue stretch at 8–86 (QDSDSTAAVA…KYLDQEKEDG (79 aa)) folds into the MIT domain. The important for association with membranes stretch occupies residues 168-231 (SGLEEIKQSL…SLGYYDLDLR (64 aa)).

As to quaternary structure, homodimer. Interacts (via MIT domain) with CHMP1A, CHMP1B, CHMP2A and IST1.

The protein localises to the late endosome membrane. Its subcellular location is the midbody. It localises to the membrane. Required for efficient abscission at the end of cytokinesis, together with components of the ESCRT-III complex. In Mus musculus (Mouse), this protein is MIT domain-containing protein 1 (Mitd1).